The chain runs to 146 residues: Aspartate carbamoyltransferase regulatory chain (146 aa).

Cys102, Cys107, Cys131, and Cys134 together coordinate Zn(2+).

It belongs to the PyrI family. In terms of assembly, contains catalytic and regulatory chains. The cofactor is Zn(2+).

Functionally, involved in allosteric regulation of aspartate carbamoyltransferase. In Clostridium botulinum (strain Okra / Type B1), this protein is Aspartate carbamoyltransferase regulatory chain.